Here is a 163-residue protein sequence, read N- to C-terminus: Nucleotide-binding protein Bcer98_0876 (163 aa).

The protein belongs to the YajQ family.

Its function is as follows. Nucleotide-binding protein. The polypeptide is Nucleotide-binding protein Bcer98_0876 (Bacillus cytotoxicus (strain DSM 22905 / CIP 110041 / 391-98 / NVH 391-98)).